The primary structure comprises 103 residues: Large ribosomal subunit protein bL21 (103 aa).

This sequence belongs to the bacterial ribosomal protein bL21 family. As to quaternary structure, part of the 50S ribosomal subunit. Contacts protein L20.

In terms of biological role, this protein binds to 23S rRNA in the presence of protein L20. The protein is Large ribosomal subunit protein bL21 of Ralstonia nicotianae (strain ATCC BAA-1114 / GMI1000) (Ralstonia solanacearum).